The chain runs to 183 residues: Ly6/PLAUR domain-containing protein 6B (183 aa).

Residues 1–39 (MLYKSSDRPAHKVSMLLLCHALAIAVVQIVIFSESWAFA) form the signal peptide. Positions 60–151 (FKCFTCENAG…VELPTNHTNA (92 aa)) constitute a UPAR/Ly6 domain. Residues 60-154 (FKCFTCENAG…PTNHTNAVFA (95 aa)) form a sufficient for inhibiting alpha-7 nAChR currents region. Intrachain disulfides connect cysteine 62–cysteine 90, cysteine 65–cysteine 74, cysteine 83–cysteine 109, cysteine 115–cysteine 134, cysteine 120–cysteine 131, and cysteine 135–cysteine 140. Serine 164 carries the GPI-anchor amidated serine lipid modification. Residues 165 to 183 (SAPTLYLPVLAWVFVLPLL) constitute a propeptide, removed in mature form.

It is found in the cell membrane. In terms of biological role, likely acts as a modulator of nicotinic acetylcholine receptors (nAChRs) activity. In vitro acts on nAChRs in a subtype- and stoichiometry-dependent manner. Modulates specifically alpha-3(3):beta-4(2) nAChRs by enhancing the sensitivity to ACh, decreasing ACh-induced maximal current response and increasing the rate of desensitization to ACh; has no effect on alpha-7 homomeric nAChRs; modulates alpha-3(2):alpha-5:beta-4(2) nAChRs in the context of CHRNA5/alpha-5 variant Asn-398 but not its wild-type sequence. However, according to another report in vitro it can weakly inhibits alpha-7 nAChRs. The polypeptide is Ly6/PLAUR domain-containing protein 6B (LYPD6B) (Homo sapiens (Human)).